The sequence spans 130 residues: Small ribosomal subunit protein uS8 (130 aa).

Belongs to the universal ribosomal protein uS8 family. In terms of assembly, part of the 30S ribosomal subunit.

One of the primary rRNA binding proteins, it binds directly to 16S rRNA central domain where it helps coordinate assembly of the platform of the 30S subunit. This chain is Small ribosomal subunit protein uS8, found in Methanosphaera stadtmanae (strain ATCC 43021 / DSM 3091 / JCM 11832 / MCB-3).